The chain runs to 1645 residues: Protein MON2 homolog (1645 aa).

Belongs to the MON2 family.

Its function is as follows. May be required for traffic between late Golgi and early endosomes. This is Protein MON2 homolog from Caenorhabditis briggsae.